The chain runs to 545 residues: MLTQLKTYPKLLKHYEEIKEVHMRDWFSKDKERASRYFVQLESLSLDYSKNRLNDTTLKLLFELAKDCSLKEKIEAMFKGEKINTTEKRAVLHTALRSLNDAEILLDNMEVLKSVRSVLKRMRAFSDSVRSGKRLGYTNQVITDIVNIGIGGSDLGALMVCTALKRYGHPRLKMHFVSNVDGTQILDVLEKINPASTLFIVASKTFSTQETLTNALTARKWFVERSGDEKHIAKHFVAVSTNKEAVQQFGIDEHNMFEFWDFVGGRYSLWSAIGLSIMIYLGKKNFNALLKGAYLMDEHFRNAPFESNLPVLMGLIGVWYINFFQSKSHLIAPYDQYLRHFPKFIQQLDMESNGKRISKKGEIIPYDTCPVVWGDMGINAQHAFFQLLHQGTHLIPIDFIASLDKKPNAKGHHEILFSNVLAQAQAFMKGKSYEEALGELLSKGLDKDEAKDLAHHRVFFGNRPSNILLLEKISPSNIGALVALYEHKVFVQGVIWDINSFDQWGVELGKELAVPILQELEGHKSNAYFDSSTRHLIELYKNYNQ.

E351 serves as the catalytic Proton donor. Catalysis depends on residues H382 and K510.

It belongs to the GPI family.

It is found in the cytoplasm. It carries out the reaction alpha-D-glucose 6-phosphate = beta-D-fructose 6-phosphate. It participates in carbohydrate biosynthesis; gluconeogenesis. It functions in the pathway carbohydrate degradation; glycolysis; D-glyceraldehyde 3-phosphate and glycerone phosphate from D-glucose: step 2/4. In terms of biological role, catalyzes the reversible isomerization of glucose-6-phosphate to fructose-6-phosphate. The polypeptide is Glucose-6-phosphate isomerase (Helicobacter pylori (strain J99 / ATCC 700824) (Campylobacter pylori J99)).